We begin with the raw amino-acid sequence, 159 residues long: Nucleotide-binding protein PSPPH_4093 (159 aa).

It belongs to the YajQ family.

Nucleotide-binding protein. The polypeptide is Nucleotide-binding protein PSPPH_4093 (Pseudomonas savastanoi pv. phaseolicola (strain 1448A / Race 6) (Pseudomonas syringae pv. phaseolicola (strain 1448A / Race 6))).